Reading from the N-terminus, the 330-residue chain is GTPase Obg (330 aa).

An Obg domain is found at 1–159 (MHFIDEVKIY…MWIHLRLKLL (159 aa)). In terms of domain architecture, OBG-type G spans 160–327 (SDVGLVGLPN…IVKLALEIIK (168 aa)). GTP-binding positions include 166–173 (GLPNAGKS), 191–195 (FTTLV), 212–215 (DIPG), 279–282 (NKCD), and 308–310 (STY). Mg(2+) is bound by residues serine 173 and threonine 193.

This sequence belongs to the TRAFAC class OBG-HflX-like GTPase superfamily. OBG GTPase family. In terms of assembly, monomer. The cofactor is Mg(2+).

It localises to the cytoplasm. Its function is as follows. An essential GTPase which binds GTP, GDP and possibly (p)ppGpp with moderate affinity, with high nucleotide exchange rates and a fairly low GTP hydrolysis rate. Plays a role in control of the cell cycle, stress response, ribosome biogenesis and in those bacteria that undergo differentiation, in morphogenesis control. The sequence is that of GTPase Obg from Rickettsia typhi (strain ATCC VR-144 / Wilmington).